The sequence spans 434 residues: Adenylosuccinate synthetase (434 aa).

Residues 22–28 (GDEGKGK) and 50–52 (GHT) each bind GTP. The active-site Proton acceptor is the aspartate 23. Mg(2+)-binding residues include aspartate 23 and glycine 50. Residues 23–26 (DEGK), 48–51 (NAGH), threonine 139, arginine 153, glutamine 234, threonine 249, and arginine 313 each bind IMP. Histidine 51 (proton donor) is an active-site residue. 309–315 (ATTGRKR) is a substrate binding site. GTP contacts are provided by residues arginine 315, 341 to 343 (KLD), and 423 to 425 (SVG).

Belongs to the adenylosuccinate synthetase family. In terms of assembly, homodimer. It depends on Mg(2+) as a cofactor.

It is found in the cytoplasm. The catalysed reaction is IMP + L-aspartate + GTP = N(6)-(1,2-dicarboxyethyl)-AMP + GDP + phosphate + 2 H(+). It participates in purine metabolism; AMP biosynthesis via de novo pathway; AMP from IMP: step 1/2. In terms of biological role, plays an important role in the de novo pathway of purine nucleotide biosynthesis. Catalyzes the first committed step in the biosynthesis of AMP from IMP. The polypeptide is Adenylosuccinate synthetase (Chlorobium phaeobacteroides (strain DSM 266 / SMG 266 / 2430)).